Consider the following 251-residue polypeptide: DNA repair protein RecO (251 aa).

It belongs to the RecO family.

Functionally, involved in DNA repair and RecF pathway recombination. This is DNA repair protein RecO from Macrococcus caseolyticus (strain JCSC5402) (Macrococcoides caseolyticum).